A 314-amino-acid polypeptide reads, in one-letter code: Coiled-coil domain-containing protein 92 (314 aa).

Coiled coils occupy residues 1–27 (MAAT…HAST) and 59–113 (DSSS…EKKY). Disordered regions lie at residues 153–193 (LSSS…KKSL) and 251–314 (ASDR…DRTV). The segment covering 176 to 186 (PPKDKLPETPR) has biased composition (basic and acidic residues). Phosphoserine is present on Ser192. Residues 266–280 (KPHKTHVGVAHRIHH) show a composition bias toward basic residues.

In terms of assembly, interacts with CEP164. Phosphorylated at Ser-192 by TTBK2.

It is found in the cytoplasm. The protein resides in the cytoskeleton. The protein localises to the microtubule organizing center. It localises to the centrosome. Its subcellular location is the centriole. Its function is as follows. Interferon-stimulated protein that plays a role in innate immunity. The chain is Coiled-coil domain-containing protein 92 (Ccdc92) from Mus musculus (Mouse).